The chain runs to 128 residues: Large ribosomal subunit protein bL17 (128 aa).

The protein belongs to the bacterial ribosomal protein bL17 family. Part of the 50S ribosomal subunit. Contacts protein L32.

The polypeptide is Large ribosomal subunit protein bL17 (Streptococcus gordonii (strain Challis / ATCC 35105 / BCRC 15272 / CH1 / DL1 / V288)).